A 227-amino-acid chain; its full sequence is Rho-related GTP-binding protein RhoN (227 aa).

A GTP-binding site is contributed by 14 to 21; that stretch reads GDAECGKT. The Effector region motif lies at 36 to 44; that stretch reads YVPTVFENY. GTP contacts are provided by residues 61 to 65 and 119 to 122; these read DTSGS and CKLD. Positions 186 to 227 are disordered; the sequence is HRQLRRTDSRRGLQRSTQLSGRPDRGNEGEMHKDRAKSCNLM. Residues 207 to 227 are compositionally biased toward basic and acidic residues; it reads RPDRGNEGEMHKDRAKSCNLM. At C224 the chain carries Cysteine methyl ester. C224 carries the S-geranylgeranyl cysteine lipid modification. Positions 225-227 are cleaved as a propeptide — removed in mature form; it reads NLM.

It belongs to the small GTPase superfamily. Rho family. In terms of assembly, interacts with the Rho-GAP domain of RACGAP1. Interacts with UBXD5. Interacts with PRAG1. In terms of tissue distribution, expressed specifically in neurons in the brain and spinal cord and also in hepatic stellate cells.

The protein resides in the cytoplasmic vesicle. The protein localises to the secretory vesicle. It is found in the acrosome membrane. May be specifically involved in neuronal and hepatic functions. Is a C3 toxin-insensitive member of the Rho subfamily. The polypeptide is Rho-related GTP-binding protein RhoN (Rnd2) (Mus musculus (Mouse)).